A 902-amino-acid polypeptide reads, in one-letter code: Histone-lysine N-methyltransferase CLF (902 aa).

Over residues 1–14 (MASEASPSSSATRS) the composition is skewed to low complexity. 3 disordered regions span residues 1–33 (MASEASPSSSATRSEPPKDSPAEERGPASKEVS), 73–107 (SMERGGSCKDGSDLLVKRQRDSPGMKSGIDESNNN), and 335–522 (GKTG…FMGE). Composition is skewed to basic and acidic residues over residues 15–33 (EPPKDSPAEERGPASKEVS) and 78–95 (GSCKDGSDLLVKRQRDSP). Residues 337-357 (TGTSSDGAGTKTTPTKFSSKL) show a composition bias toward polar residues. Residues 394-403 (DKVSSSPKVK) show a composition bias toward low complexity. Positions 404–416 (GSGRRVGRKRNKN) are enriched in basic residues. Positions 438-449 (SDSIASGSCSPS) are enriched in low complexity. Positions 459–473 (ATSSSQKHVKSGNSG) are enriched in polar residues. Residues 531–581 (TNKLWRPLEKSLFDKGVEIFGMNSCLIARNLLSGFKSCWEVFQYMTCSENK) form the SANT domain. One can recognise a CXC domain in the interval 638 to 737 (RKRITEKKDQ…SLGVPSQRGD (100 aa)). Residues 752–867 (QRVLLGISDV…AGEELFYDYR (116 aa)) form the SET domain. Tyrosine 866 serves as a coordination point for S-adenosyl-L-methionine. The segment covering 875 to 890 (AWAKKPEAPGSKKDEN) has biased composition (basic and acidic residues). Residues 875-902 (AWAKKPEAPGSKKDENVTPSVGRPKKLA) form a disordered region.

The protein belongs to the class V-like SAM-binding methyltransferase superfamily. Histone-lysine methyltransferase family. EZ subfamily. In terms of assembly, probable component of a PcG complex. In plants, PcG complexes are probably composed of a member of the EZ family (CLF or MEA), FIE, and a member of the VEFS family (FIS2, VRN2 or EMF2). Interacts with FIE. Interacts with RING1A. Binds to ALP1. Interacts with BLI. Binds to ATX1 in the nucleus. Interacts with EOL1. Interacts (via SANT domain) with HXK1 in the nucleus. In terms of tissue distribution, strongly expressed throughout the apical meristem, leaf primordia, and leaves of 7-8 day-old seedling. Weakly expressed in the vasculature of hypocotyl. Strongly expressed throughout the young stages 1 and 2 floral meristems that arose on the flanks of the apex. In stage 3 and 4 flowers, it is expressed in the emerging sepal primordia and in the dome of the floral meristem. During stages 6 and 7, it is strongly expressed in developing petal and stamen, and weakly expressed in the sepals. Late in floral development, at stage 12, it is weakly expressed in all floral whorls, and expressed at intermediate level in petals and ovules.

The protein resides in the nucleus. The catalysed reaction is L-lysyl-[histone] + S-adenosyl-L-methionine = N(6)-methyl-L-lysyl-[histone] + S-adenosyl-L-homocysteine + H(+). Polycomb group (PcG) protein. Catalytic subunit of some PcG multiprotein complex, which methylates 'Lys-27' of histone H3, leading to transcriptional repression of the affected target genes, mainly abscisic acid (ABA) responsive elements. Required to regulate floral development by repressing the AGAMOUS homeotic gene in leaves, inflorescence stems and flowers. Together with ATX1, modulates AG nucleosome methylation statement. Regulates the antero-posterior organization of the endosperm, as well as the division and elongation rates of leaf cells. PcG proteins act by forming multiprotein complexes, which are required to maintain the transcriptionally repressive state of homeotic genes throughout development. PcG proteins are not required to initiate repression, but to maintain it during later stages of development. Forms a nuclear complex with EZA1/SWN and HXK1 to target common glucose-responsive genes and regulate glucose signaling by glucose-mediated gene repression. Affects the recruitment of HXK1 to the target chromatin. The chain is Histone-lysine N-methyltransferase CLF from Arabidopsis thaliana (Mouse-ear cress).